The primary structure comprises 327 residues: Eukaryotic translation initiation factor 3 subunit I (327 aa).

5 WD repeats span residues 8-49 (GHER…GSYD), 51-89 (HNGAVWDIDVSWDTTKCVTASGDLTVKIWDAELGNCLYT), 188-227 (VHRYSVQDLQLSPRGDFLISASRDKTAALLDVNDLKKLKQ), 229-268 (KSERPVNSACISPNRDHICLGGGEDAMQVTQTSVSAGHFE), and 285-324 (GHFGPINTMAWHPSGTIIATGGEDGYIRIQEFDEDYLGFT).

This sequence belongs to the eIF-3 subunit I family. In terms of assembly, component of the eukaryotic translation initiation factor 3 (eIF-3) complex.

It localises to the cytoplasm. Component of the eukaryotic translation initiation factor 3 (eIF-3) complex, which is involved in protein synthesis of a specialized repertoire of mRNAs and, together with other initiation factors, stimulates binding of mRNA and methionyl-tRNAi to the 40S ribosome. The eIF-3 complex specifically targets and initiates translation of a subset of mRNAs involved in cell proliferation. The protein is Eukaryotic translation initiation factor 3 subunit I of Caenorhabditis elegans.